Reading from the N-terminus, the 431-residue chain is PHD finger-containing protein 1 (431 aa).

The PHD-type zinc-finger motif lies at 7-59; sequence GPVCQTCGDIGFEEALVFCDSCMFESIHRYCLGITPIPFTEYITWICEDCDNS. Zn(2+) contacts are provided by Cys10, Cys13, Cys25, Cys28, His34, Cys37, Cys53, and Cys56. The disordered stretch occupies residues 125–221; it reads EAADSSSVPD…QESSDSRKPH (97 aa). The segment covering 128 to 139 has biased composition (polar residues); that stretch reads DSSSVPDHSSCT. Over residues 160–171 the composition is skewed to basic residues; the sequence is KKKKKKKKKKSI. The span at 191-202 shows a compositional bias: low complexity; it reads VVEPVEVSSSSP. Residues 205–221 show a composition bias toward basic and acidic residues; that stretch reads ETMESKRQESSDSRKPH.

As to quaternary structure, interacts directly with AIPP3/BDT1.

Together with AIPP3/BDT1, cooperates to form a BAH-PHD bivalent histone reader complex able to read histone H3 lysine 27 trimethylation (H3K27me3) histone marks in order to regulate transcription, especially to prevent early flowering; promotes AIPP3/BDT1 binding to H3K27me3. The sequence is that of PHD finger-containing protein 1 from Arabidopsis thaliana (Mouse-ear cress).